We begin with the raw amino-acid sequence, 60 residues long: Large ribosomal subunit protein uL30 (60 aa).

The protein belongs to the universal ribosomal protein uL30 family. As to quaternary structure, part of the 50S ribosomal subunit.

The protein is Large ribosomal subunit protein uL30 of Streptomyces avermitilis (strain ATCC 31267 / DSM 46492 / JCM 5070 / NBRC 14893 / NCIMB 12804 / NRRL 8165 / MA-4680).